Here is a 293-residue protein sequence, read N- to C-terminus: MDLRRFITLKTVVEEGSFLRASQKLCCTQSTVTFHIQQLEQEFSVQLFEKIGRRMCLTREGKKLLPHIYELTRVMDTLREAAKKESDPDGELRVVSGETLLSYRMPQVLQRFRQRAPKVRLSLQSLNCYVIRDALLNDEADVGVFYRVGNDDALNRRELGEQSLVLVASPQIADVDFTEPGRHNACSFIINEPQCVFRQIFESTLRQRRITVENTIELISIESIKRCVAANIGVSYLPRFAVAKELECGELIELPFGEQSQTITAMCAHHAGKAVSPAMHTFIQCVEESFVAG.

The region spanning 1–58 (MDLRRFITLKTVVEEGSFLRASQKLCCTQSTVTFHIQQLEQEFSVQLFEKIGRRMCLT) is the HTH lysR-type domain. Residues 18 to 37 (FLRASQKLCCTQSTVTFHIQ) constitute a DNA-binding region (H-T-H motif).

Belongs to the LysR transcriptional regulatory family.

This is an uncharacterized protein from Escherichia coli (strain K12).